A 77-amino-acid polypeptide reads, in one-letter code: NADH-ubiquinone oxidoreductase chain 4L (77 aa).

The next 2 membrane-spanning stretches (helical) occupy residues 15 to 37 and 44 to 64; these read WQRL…LKFS and MFFY…VVMV.

This sequence belongs to the complex I subunit 4L family.

It localises to the mitochondrion membrane. The catalysed reaction is a ubiquinone + NADH + 5 H(+)(in) = a ubiquinol + NAD(+) + 4 H(+)(out). In terms of biological role, core subunit of the mitochondrial membrane respiratory chain NADH dehydrogenase (Complex I) that is believed to belong to the minimal assembly required for catalysis. Complex I functions in the transfer of electrons from NADH to the respiratory chain. The immediate electron acceptor for the enzyme is believed to be ubiquinone. The protein is NADH-ubiquinone oxidoreductase chain 4L of Caenorhabditis elegans.